Here is an 858-residue protein sequence, read N- to C-terminus: MVNFTVDQIRAIMDKKSNIRNMSVIAHVDHGKSTLTDSLVSKAGIIASARAGETRFTDTRKDEQERCITIKSTAISMYYELTENDLAFIKQCKDGSGFLINLIDSPGHVDFSSEVTAALRVTDGALVVVDCVSGVCVQTETVLRQAIAERIKPVLMMNKMDRALLELQLEPEELYQTFQRIVENVNVIISTYGEDEGGPMGNIMIDPVIGTVGFGSGLHGWAFTLKQFAEMYVAKFASKGEAQLSPADRCKKVEDMMKKLWGDRYFDPAGGKFTKTANGPDGKKYPRTFAQLILDPIFKVFDAIMNFKKEETAKLIEKLDIKLDTEDKDKEGKPLLKAVMRRWLPAGEALLQMITIHLPSPVTAQKYRCELLYEGPGDDEAAMGIKNCDPKGPLMMYISKMVPTTDKGRFYAFGRVFSGVVSTGLKVRIMGPNYTPGKKEDLYLKPIQRTILMMGRYVEPIEDVPCGNIVGLVGVDQFLVKTGTITTFDQAHNMRVMKFSVSPVVRVAVEAKNPADLPKLVEGLKRLAKSDPMVQCIIEESGEHIIAGAGELHLEICLKDLEEDHACIPLKKSDPVVSYRETVSAESDQMCLSKSPNKHNRLYMKARPFPDGLAEDIDKGDVSSRQELKTRARYLADKYEWEVTEARKIWCFGPDGTGPNMLVDVTKGVQYLNEIKDSVVAGFQWATKEGALCEENMRAVRFDIHDVTLHTDAIHRGGGQIIPTARRVLYACQLTAEPRLMEPIYLVEIQCPEQVVGGIYGVLNRKRGHVFEESQVMGTPMFVVKAYLPVNESFGFTADLRSNTGGQAFPQCVFDHWQILPGDPKDAASKPCQIVADTRKRKGLKEGIPALDNFLDKL.

Residues 17–362 (SNIRNMSVIA…MITIHLPSPV (346 aa)) form the tr-type G domain. GTP is bound by residues 26–33 (AHVDHGKS), 158–161 (NKMD), and 216–218 (SGL). His715 is subject to Diphthamide.

The protein belongs to the TRAFAC class translation factor GTPase superfamily. Classic translation factor GTPase family. EF-G/EF-2 subfamily. As to quaternary structure, binds to 80S ribosomes. Actively translating ribosomes show mutually exclusive binding of eIF5a (EIF5A or EIF5A2) and EEF2/eEF2. Interacts with serbp1; interaction sequesters eef2/eEF2 at the A-site of the ribosome, thereby blocking the interaction sites of the mRNA-tRNA complex, promoting ribosome stabilization and hibernation. Interacts with habp4; interaction takes place at the A-site of hibernating ribosomes and promotes ribosome stabilization.

It localises to the cytoplasm. The protein resides in the nucleus. It carries out the reaction GTP + H2O = GDP + phosphate + H(+). Functionally, catalyzes the GTP-dependent ribosomal translocation step during translation elongation. During this step, the ribosome changes from the pre-translocational (PRE) to the post-translocational (POST) state as the newly formed A-site-bound peptidyl-tRNA and P-site-bound deacylated tRNA move to the P and E sites, respectively. Catalyzes the coordinated movement of the two tRNA molecules, the mRNA and conformational changes in the ribosome. The sequence is that of Elongation factor 2b from Danio rerio (Zebrafish).